A 284-amino-acid polypeptide reads, in one-letter code: Nucleotide-binding protein Shewmr4_0670 (284 aa).

Residue 8 to 15 (GRSGSGKS) coordinates ATP. GTP is bound at residue 56–59 (DVRN).

The protein belongs to the RapZ-like family.

In terms of biological role, displays ATPase and GTPase activities. The chain is Nucleotide-binding protein Shewmr4_0670 from Shewanella sp. (strain MR-4).